Reading from the N-terminus, the 305-residue chain is Coenzyme PQQ synthesis protein B (305 aa).

This sequence belongs to the PqqB family.

It functions in the pathway cofactor biosynthesis; pyrroloquinoline quinone biosynthesis. In terms of biological role, may be involved in the transport of PQQ or its precursor to the periplasm. The protein is Coenzyme PQQ synthesis protein B of Cupriavidus necator (strain ATCC 17699 / DSM 428 / KCTC 22496 / NCIMB 10442 / H16 / Stanier 337) (Ralstonia eutropha).